Reading from the N-terminus, the 1066-residue chain is Isoleucine--tRNA ligase (1066 aa).

Residues 49–59 (PYVSGAIHLGT) carry the 'HIGH' region motif. The 'KMSKS' region signature appears at 625–629 (KMSKS). Position 628 (Lys-628) interacts with ATP.

This sequence belongs to the class-I aminoacyl-tRNA synthetase family. IleS type 2 subfamily. As to quaternary structure, monomer. It depends on Zn(2+) as a cofactor.

Its subcellular location is the cytoplasm. The enzyme catalyses tRNA(Ile) + L-isoleucine + ATP = L-isoleucyl-tRNA(Ile) + AMP + diphosphate. Its function is as follows. Catalyzes the attachment of isoleucine to tRNA(Ile). As IleRS can inadvertently accommodate and process structurally similar amino acids such as valine, to avoid such errors it has two additional distinct tRNA(Ile)-dependent editing activities. One activity is designated as 'pretransfer' editing and involves the hydrolysis of activated Val-AMP. The other activity is designated 'posttransfer' editing and involves deacylation of mischarged Val-tRNA(Ile). The chain is Isoleucine--tRNA ligase from Pyrococcus furiosus (strain ATCC 43587 / DSM 3638 / JCM 8422 / Vc1).